We begin with the raw amino-acid sequence, 194 residues long: Protein phosphatase 1 regulatory subunit 1B (194 aa).

Met-1 carries the N-acetylmethionine modification. Residues 1–194 (MDPKDRKKIQ…GEEPQHPSPP (194 aa)) are disordered. Residue Thr-34 is modified to Phosphothreonine; by PKA. Basic and acidic residues predominate over residues 41-63 (VSEHSSPEEEASPHQRTSGEGHH). Phosphoserine is present on residues Ser-45 and Ser-46. Thr-75 bears the Phosphothreonine mark. A compositionally biased stretch (polar residues) spans 84 to 95 (HLQTISNLSENQ). 2 positions are modified to phosphoserine: Ser-97 and Ser-130. Residues 113 to 131 (QEDDEEDEDEEEDEEEDSQ) show a composition bias toward acidic residues. The span at 160 to 170 (PPLDEPQRDGN) shows a compositional bias: basic and acidic residues. Ser-192 is subject to Phosphoserine.

Belongs to the protein phosphatase inhibitor 1 family. In terms of processing, dopamine- and cyclic AMP-regulated neuronal phosphoprotein. Phosphorylation of Thr-34 is required for activity.

It localises to the cytoplasm. Inhibitor of protein-phosphatase 1. This Mus musculus (Mouse) protein is Protein phosphatase 1 regulatory subunit 1B (Ppp1r1b).